The sequence spans 480 residues: Endoplasmic reticulum lectin 1 (480 aa).

A signal peptide spans 1–27 (MRRSDRFPCAGASLLVVLCGVFPSSFG). 2 MRH domains span residues 108-245 (SSCS…LCNH) and 339-466 (SYCF…ICKI). Cysteine 110 and cysteine 123 form a disulfide bridge. The tract at residues 152–172 (VKKSPSEAGENQEDKERTEGH) is disordered. Over residues 163–172 (QEDKERTEGH) the composition is skewed to basic and acidic residues. Cystine bridges form between cysteine 198–cysteine 231, cysteine 214–cysteine 243, cysteine 341–cysteine 354, cysteine 418–cysteine 452, and cysteine 433–cysteine 464.

It is found in the endoplasmic reticulum lumen. In terms of biological role, probable lectin that binds selectively to improperly folded lumenal proteins. May function in endoplasmic reticulum quality control and endoplasmic reticulum-associated degradation (ERAD) of both non-glycosylated proteins and glycoproteins. This Xenopus laevis (African clawed frog) protein is Endoplasmic reticulum lectin 1 (erlec1).